A 193-amino-acid polypeptide reads, in one-letter code: Ribonuclease HII (193 aa).

The RNase H type-2 domain occupies 15 to 193; it reads CIVAGIDEAG…PYHRRSFRCC (179 aa). The a divalent metal cation site is built by Asp21, Glu22, and Asp112.

The protein belongs to the RNase HII family. The cofactor is Mn(2+). Mg(2+) serves as cofactor.

It localises to the cytoplasm. It catalyses the reaction Endonucleolytic cleavage to 5'-phosphomonoester.. In terms of biological role, endonuclease that specifically degrades the RNA of RNA-DNA hybrids. This chain is Ribonuclease HII, found in Rickettsia conorii (strain ATCC VR-613 / Malish 7).